The primary structure comprises 269 residues: Putative phosphoenolpyruvate synthase regulatory protein (269 aa).

149 to 156 (GVSRSGKT) provides a ligand contact to ADP.

This sequence belongs to the pyruvate, phosphate/water dikinase regulatory protein family. PSRP subfamily.

It carries out the reaction [pyruvate, water dikinase] + ADP = [pyruvate, water dikinase]-phosphate + AMP + H(+). The catalysed reaction is [pyruvate, water dikinase]-phosphate + phosphate + H(+) = [pyruvate, water dikinase] + diphosphate. Bifunctional serine/threonine kinase and phosphorylase involved in the regulation of the phosphoenolpyruvate synthase (PEPS) by catalyzing its phosphorylation/dephosphorylation. This is Putative phosphoenolpyruvate synthase regulatory protein from Pseudoalteromonas translucida (strain TAC 125).